A 172-amino-acid chain; its full sequence is Type IV secretion system putative outer membrane lipoprotein BMEII0036 (172 aa).

The first 15 residues, 1–15 (MRTLVMVACAVSLAA), serve as a signal peptide directing secretion. A lipid anchor (N-palmitoyl cysteine) is attached at Cys16. Residue Cys16 is the site of S-diacylglycerol cysteine attachment. In terms of domain architecture, OmpA-like spans 58-172 (WPARPPKQTV…RRVDIEILRK (115 aa)).

It is found in the cell outer membrane. This is Type IV secretion system putative outer membrane lipoprotein BMEII0036 from Brucella melitensis biotype 1 (strain ATCC 23456 / CCUG 17765 / NCTC 10094 / 16M).